A 968-amino-acid polypeptide reads, in one-letter code: RNA polymerase-associated protein RapA (968 aa).

The Helicase ATP-binding domain maps to 164-334 (DVGRRHAPRV…FARLRLLDPN (171 aa)). Residue 177–184 (DEVGLGKT) coordinates ATP. The DEAH box signature appears at 280-283 (DEAH). The 196-residue stretch at 490 to 685 (RVEWLMGYLT…ALKAQLEQGR (196 aa)) folds into the Helicase C-terminal domain.

This sequence belongs to the SNF2/RAD54 helicase family. RapA subfamily. In terms of assembly, interacts with the RNAP. Has a higher affinity for the core RNAP than for the holoenzyme. Its ATPase activity is stimulated by binding to RNAP.

Its function is as follows. Transcription regulator that activates transcription by stimulating RNA polymerase (RNAP) recycling in case of stress conditions such as supercoiled DNA or high salt concentrations. Probably acts by releasing the RNAP, when it is trapped or immobilized on tightly supercoiled DNA. Does not activate transcription on linear DNA. Probably not involved in DNA repair. In Salmonella paratyphi C (strain RKS4594), this protein is RNA polymerase-associated protein RapA.